The chain runs to 326 residues: Aldo-keto reductase family 1 member D1 (326 aa).

NADP(+)-binding positions include 22–26 (GLGTY) and Asp52. Tyr26 provides a ligand contact to substrate. Substrate-binding residues include Tyr57, Trp88, Glu119, and Tyr131. The active-site Proton donor is the Tyr57. Residues 168-169 (SN), Gln192, and 219-224 (YSPLGT) each bind NADP(+). Residue Trp230 participates in substrate binding. Residue 273-283 (KSTTPERIKEN) coordinates NADP(+).

It belongs to the aldo/keto reductase family. Post-translationally, the N-terminus is blocked.

The protein localises to the cytoplasm. It carries out the reaction 5beta-cholestan-3-one + NADP(+) = cholest-4-en-3-one + NADPH + H(+). The catalysed reaction is 4,5beta-dihydrocortisone + NADP(+) = cortisone + NADPH + H(+). It catalyses the reaction cortisol + NADPH + H(+) = 5beta-dihydrocortisol + NADP(+). The enzyme catalyses corticosterone + NADPH + H(+) = 5beta-dihydrocorticosterone + NADP(+). It carries out the reaction 7alpha,12alpha-dihydroxycholest-4-en-3-one + NADPH + H(+) = 7alpha,12alpha-dihydroxy-5beta-cholestan-3-one + NADP(+). The catalysed reaction is 7alpha-hydroxycholest-4-en-3-one + NADPH + H(+) = 7alpha-hydroxy-5beta-cholestan-3-one + NADP(+). It catalyses the reaction epitestosterone + NADPH + H(+) = 5beta-dihydroepitestosterone + NADP(+). The enzyme catalyses androst-4-ene-3,17-dione + NADPH + H(+) = 5beta-androstane-3,17-dione + NADP(+). It carries out the reaction progesterone + NADPH + H(+) = 5beta-pregnan-3,20-dione + NADP(+). The catalysed reaction is 21-hydroxyprogesterone + NADPH + H(+) = 5beta-dihydrodeoxycorticosterone + NADP(+). It catalyses the reaction aldosterone + NADPH + H(+) = 5beta-dihydroaldosterone + NADP(+). The enzyme catalyses 17beta-hydroxyandrosta-1,4-dien-3-one + NADPH + H(+) = 17beta-hydroxy-5beta-androst-1-en-3-one + NADP(+). It carries out the reaction 17beta-hydroxyestr-4-en-3-one + NADPH + H(+) = 17beta-hydroxy-5beta-estran-3-one + NADP(+). The catalysed reaction is 5beta-dihydrotestosterone + NADP(+) = testosterone + NADPH + H(+). It catalyses the reaction androst-4-ene-3,11,17-trione + NADPH + H(+) = 17beta-hydroxyandrost-4-ene-3,11-dione + NADP(+). Subject to inhibition by high substrate concentrations. Inhibited by testosterone concentrations above 10 uM. Inhibited by the primary and secondary bile acids chenodeoxycholic acid and ursodeoxycholic acid. Functionally, catalyzes the stereospecific NADPH-dependent reduction of the C4-C5 double bond of bile acid intermediates and steroid hormones carrying a delta(4)-3-one structure to yield an A/B cis-ring junction. This cis-configuration is crucial for bile acid biosynthesis and plays important roles in steroid metabolism. Capable of reducing a broad range of delta-(4)-3-ketosteroids from C18 (such as, 17beta-hydroxyestr-4-en-3-one) to C27 (such as, 7alpha-hydroxycholest-4-en-3-one). This is Aldo-keto reductase family 1 member D1 (Akr1d1) from Rattus norvegicus (Rat).